Here is a 149-residue protein sequence, read N- to C-terminus: L-alanine exporter AlaE (149 aa).

4 consecutive transmembrane segments (helical) span residues 17–37 (FAMVIFCFITGMFIEIFISGM), 43–63 (LASRMLSIPVNIAIAWPYGVF), 86–106 (LTAYVLFQSPVYAAILFTVGA), and 111–131 (IITAVSSNAAVSCVMGVFYGY).

Belongs to the AlaE exporter family.

Its subcellular location is the cell inner membrane. Functionally, exports L-alanine. The sequence is that of L-alanine exporter AlaE from Aliivibrio salmonicida (strain LFI1238) (Vibrio salmonicida (strain LFI1238)).